The following is a 432-amino-acid chain: Isocitrate lyase (432 aa).

The tract at residues 1–24 (MSNVGKPRTAQEIQQDWDTNPRWN) is disordered. A compositionally biased stretch (polar residues) spans 11 to 22 (QEIQQDWDTNPR). Residue 93 to 95 (SGW) coordinates substrate. Aspartate 155 is a binding site for Mg(2+). Cysteine 193 functions as the Proton acceptor in the catalytic mechanism. Substrate contacts are provided by residues 194–195 (GH), arginine 230, 315–319 (NCSPS), and threonine 349.

Belongs to the isocitrate lyase/PEP mutase superfamily. Isocitrate lyase family. Homotetramer. It depends on Mg(2+) as a cofactor.

It catalyses the reaction D-threo-isocitrate = glyoxylate + succinate. It participates in carbohydrate metabolism; glyoxylate cycle; (S)-malate from isocitrate: step 1/2. Inhibited by 3-phosphoglycerate, 6-phosphogluconate, phosphoenolpyruvate (PEP), fructose 1,6-bisphosphate, glycolate, oxalate, and itaconate. Involved in the metabolic adaptation in response to environmental changes. Catalyzes the reversible formation of succinate and glyoxylate from isocitrate, a key step of the glyoxylate cycle, which operates as an anaplerotic route for replenishing the tricarboxylic acid cycle during growth on fatty acid substrates. This Corynebacterium glutamicum (strain ATCC 13032 / DSM 20300 / JCM 1318 / BCRC 11384 / CCUG 27702 / LMG 3730 / NBRC 12168 / NCIMB 10025 / NRRL B-2784 / 534) protein is Isocitrate lyase.